We begin with the raw amino-acid sequence, 162 residues long: Peroxiredoxin-2C (162 aa).

The Thioredoxin domain occupies 4–162; that stretch reads VAVGDTLPDG…SGAEEILKAL (159 aa). Cys51 (cysteine sulfenic acid (-SOH) intermediate) is an active-site residue.

It belongs to the peroxiredoxin family. Prx5 subfamily. Monomer.

It localises to the cytoplasm. The catalysed reaction is [glutaredoxin]-dithiol + a hydroperoxide = [glutaredoxin]-disulfide + an alcohol + H2O. Functionally, reduces hydrogen peroxide and alkyl hydroperoxides with reducing equivalents provided through the thioredoxin or glutaredoxin system. May be involved in intracellular redox signaling. Thiol-specific peroxidase that catalyzes the reduction of hydrogen peroxide and organic hydroperoxides to water and alcohols, respectively. Plays a role in cell protection against oxidative stress by detoxifying peroxides. This Oryza sativa subsp. japonica (Rice) protein is Peroxiredoxin-2C (PRXIIC).